The primary structure comprises 167 residues: Homeobox protein EgHBX3 (167 aa).

The segment at residues 80–139 is a DNA-binding region (homeobox); the sequence is SQSKRRVLFNKFQISQLEKRLKQRYLTAQERQELAHTIGLTPTQVKIWFQNHAYKMKRLF.

This sequence belongs to the NK-2 homeobox family.

It localises to the nucleus. This chain is Homeobox protein EgHBX3 (HBX3), found in Echinococcus granulosus (Hydatid tapeworm).